A 469-amino-acid chain; its full sequence is Ribulose bisphosphate carboxylase large chain (469 aa).

Lys8 is modified (N6,N6,N6-trimethyllysine). The substrate site is built by Asn117 and Thr167. The active-site Proton acceptor is the Lys169. Lys171 lines the substrate pocket. Mg(2+) is bound by residues Lys195, Asp197, and Glu198. Position 195 is an N6-carboxylysine (Lys195). The Proton acceptor role is filled by His288. 3 residues coordinate substrate: Arg289, His321, and Ser373.

This sequence belongs to the RuBisCO large chain family. Type I subfamily. As to quaternary structure, heterohexadecamer of 8 large chains and 8 small chains; disulfide-linked. The disulfide link is formed within the large subunit homodimers. Mg(2+) is required as a cofactor. In terms of processing, the disulfide bond which can form in the large chain dimeric partners within the hexadecamer appears to be associated with oxidative stress and protein turnover.

It localises to the plastid. The protein resides in the chloroplast. It catalyses the reaction 2 (2R)-3-phosphoglycerate + 2 H(+) = D-ribulose 1,5-bisphosphate + CO2 + H2O. It carries out the reaction D-ribulose 1,5-bisphosphate + O2 = 2-phosphoglycolate + (2R)-3-phosphoglycerate + 2 H(+). Functionally, ruBisCO catalyzes two reactions: the carboxylation of D-ribulose 1,5-bisphosphate, the primary event in carbon dioxide fixation, as well as the oxidative fragmentation of the pentose substrate in the photorespiration process. Both reactions occur simultaneously and in competition at the same active site. In Akania bidwillii (Turnipwood), this protein is Ribulose bisphosphate carboxylase large chain.